The following is a 173-amino-acid chain: Mesencephalic astrocyte-derived neurotrophic factor homolog (173 aa).

Positions 1 to 22 (MNTSHIVLMICFIVGVGQTALA) are cleaved as a signal peptide. Disulfide bonds link C28-C114, C31-C103, C61-C72, and C148-C151.

Belongs to the ARMET family.

It localises to the secreted. Its function is as follows. Required during the maturation of the embryonic nervous system for maintenance of neuronal and cuticular connectivity. Essential for maintenance of dopaminergic neurons and dopamine levels. The sequence is that of Mesencephalic astrocyte-derived neurotrophic factor homolog from Drosophila virilis (Fruit fly).